Here is a 441-residue protein sequence, read N- to C-terminus: Ribosomal protein uS12 methylthiotransferase RimO (441 aa).

Residues 7-117 (PKISFVSLGC…VLEAVHRARP (111 aa)) enclose the MTTase N-terminal domain. Residues C16, C52, C81, C148, C152, and C155 each coordinate [4Fe-4S] cluster. One can recognise a Radical SAM core domain in the interval 134-371 (LTPRHYAYLK…MARQQAISAR (238 aa)). Residues 374-440 (KRKVGTRQQV…AYDLHGTVAG (67 aa)) form the TRAM domain.

This sequence belongs to the methylthiotransferase family. RimO subfamily. It depends on [4Fe-4S] cluster as a cofactor.

The protein localises to the cytoplasm. The catalysed reaction is L-aspartate(89)-[ribosomal protein uS12]-hydrogen + (sulfur carrier)-SH + AH2 + 2 S-adenosyl-L-methionine = 3-methylsulfanyl-L-aspartate(89)-[ribosomal protein uS12]-hydrogen + (sulfur carrier)-H + 5'-deoxyadenosine + L-methionine + A + S-adenosyl-L-homocysteine + 2 H(+). In terms of biological role, catalyzes the methylthiolation of an aspartic acid residue of ribosomal protein uS12. The protein is Ribosomal protein uS12 methylthiotransferase RimO of Rhodopseudomonas palustris (strain ATCC BAA-98 / CGA009).